The primary structure comprises 157 residues: Protein Smg (157 aa).

Belongs to the Smg family.

The chain is Protein Smg from Shigella boydii serotype 4 (strain Sb227).